The sequence spans 316 residues: Aspartate-semialdehyde dehydrogenase (316 aa).

Residues 13–16 (TGAV) and 41–42 (RS) contribute to the NADP(+) site. A phosphate-binding site is contributed by arginine 101. The active-site Acyl-thioester intermediate is the cysteine 132. Glutamine 159 contacts substrate. Residue 162–163 (SG) participates in NADP(+) binding. A phosphate-binding site is contributed by lysine 216. Arginine 238 contributes to the substrate binding site. Histidine 245 serves as the catalytic Proton acceptor. An NADP(+)-binding site is contributed by asparagine 316.

This sequence belongs to the aspartate-semialdehyde dehydrogenase family. Homodimer.

It carries out the reaction L-aspartate 4-semialdehyde + phosphate + NADP(+) = 4-phospho-L-aspartate + NADPH + H(+). It participates in amino-acid biosynthesis; L-lysine biosynthesis via DAP pathway; (S)-tetrahydrodipicolinate from L-aspartate: step 2/4. Its pathway is amino-acid biosynthesis; L-methionine biosynthesis via de novo pathway; L-homoserine from L-aspartate: step 2/3. The protein operates within amino-acid biosynthesis; L-threonine biosynthesis; L-threonine from L-aspartate: step 2/5. In terms of biological role, catalyzes the NADPH-dependent formation of L-aspartate-semialdehyde (L-ASA) by the reductive dephosphorylation of L-aspartyl-4-phosphate. This Vibrio mimicus protein is Aspartate-semialdehyde dehydrogenase (asd).